The chain runs to 332 residues: tRNA-dihydrouridine(20/20a) synthase (332 aa).

FMN-binding positions include 19 to 21 and glutamine 71; that span reads PML. The Proton donor role is filled by cysteine 101. FMN contacts are provided by residues lysine 140, histidine 173, 213–215, and 235–236; these read NGG and GR.

Belongs to the Dus family. DusA subfamily. FMN is required as a cofactor.

The enzyme catalyses 5,6-dihydrouridine(20) in tRNA + NADP(+) = uridine(20) in tRNA + NADPH + H(+). It catalyses the reaction 5,6-dihydrouridine(20) in tRNA + NAD(+) = uridine(20) in tRNA + NADH + H(+). The catalysed reaction is 5,6-dihydrouridine(20a) in tRNA + NADP(+) = uridine(20a) in tRNA + NADPH + H(+). It carries out the reaction 5,6-dihydrouridine(20a) in tRNA + NAD(+) = uridine(20a) in tRNA + NADH + H(+). In terms of biological role, catalyzes the synthesis of 5,6-dihydrouridine (D), a modified base found in the D-loop of most tRNAs, via the reduction of the C5-C6 double bond in target uridines. Specifically modifies U20 and U20a in tRNAs. The protein is tRNA-dihydrouridine(20/20a) synthase of Salmonella typhimurium (strain LT2 / SGSC1412 / ATCC 700720).